The sequence spans 95 residues: Co-chaperonin GroES (95 aa).

The protein belongs to the GroES chaperonin family. As to quaternary structure, heptamer of 7 subunits arranged in a ring. Interacts with the chaperonin GroEL.

The protein localises to the cytoplasm. Functionally, together with the chaperonin GroEL, plays an essential role in assisting protein folding. The GroEL-GroES system forms a nano-cage that allows encapsulation of the non-native substrate proteins and provides a physical environment optimized to promote and accelerate protein folding. GroES binds to the apical surface of the GroEL ring, thereby capping the opening of the GroEL channel. This is Co-chaperonin GroES from Stenotrophomonas maltophilia (strain R551-3).